The chain runs to 472 residues: MGAVLGVFSLASWVPCLCGGASCLLCSCCPNSKNSTLTRLIYAFILFLGTIVCCIMFHEGMETQLKKIPGFCDEGLSTRITDIMDKECDVLVRYKAVYRISFALAVFFFAFSLLMLNVKTSKDPRAAIHNGFWFFKIAAIVGVMVGSFYIPGGHFNTAWFVIGMVGAAFFILIQLVLLVDFAHSWNESWVNRMEEGNPKCWYAALLSVTSLFYILSIIFAGLLYTYYTKPDGCTENKFFISFNLILCVVISVLSIHPKIQEHQPRSGLLQSSLITLYTMYLTWSAMSNEPDRSCNPGLLSIITHMTSSTLAPANTTAPAPTPAVPLQSGPSLNKENFIGLLVFVLSLSYSSIRNSSNSQVSKLTLSGSDSVILRDTAANGASDEEDGRPRRAVDNEREGVQYNYSMFHLMLCSASLYIMMTLTNWYSPDANFQSMTSKWPAVWVKISSSWVCLLLYVWTLVAPLVLTNRDFS.

The Extracellular portion of the chain corresponds to M1–K95. N-linked (GlcNAc...) asparagine glycosylation occurs at N34. A helical membrane pass occupies residues A96–L116. Topologically, residues N117–G131 are cytoplasmic. A helical membrane pass occupies residues F132–G152. Residues G153–A158 lie on the Extracellular side of the membrane. Residues W159–V179 traverse the membrane as a helical segment. Residues D180–Y202 are Cytoplasmic-facing. A helical membrane pass occupies residues A203–L223. Residues Y224 to F238 lie on the Extracellular side of the membrane. The chain crosses the membrane as a helical span at residues F239–I259. The Cytoplasmic portion of the chain corresponds to Q260–S328. The chain crosses the membrane as a helical span at residues G329–Y349. Residues S350–S405 are Extracellular-facing. The N-linked (GlcNAc...) asparagine glycan is linked to N354. S370 is modified (phosphoserine). N-linked (GlcNAc...) asparagine glycosylation occurs at N403. Residues M406–Y426 traverse the membrane as a helical segment. At S427–K445 the chain is on the cytoplasmic side. A helical transmembrane segment spans residues I446–L466. At T467 to S472 the chain is on the extracellular side.

This sequence belongs to the TDE1 family. Post-translationally, N-glycosylated.

The protein resides in the cell membrane. Its subcellular location is the golgi apparatus membrane. It carries out the reaction a 1,2-diacyl-sn-glycero-3-phospho-L-serine(in) = a 1,2-diacyl-sn-glycero-3-phospho-L-serine(out). The enzyme catalyses a 1,2-diacyl-sn-glycero-3-phosphocholine(in) = a 1,2-diacyl-sn-glycero-3-phosphocholine(out). It catalyses the reaction a 1,2-diacyl-sn-glycero-3-phosphoethanolamine(in) = a 1,2-diacyl-sn-glycero-3-phosphoethanolamine(out). Its function is as follows. Restriction factor required to restrict infectivity of gammaretroviruses: acts by inhibiting an early step of viral infection. Impairs the penetration of the viral particle into the cytoplasm. Non-ATP-dependent, non-specific lipid transporter for phosphatidylserine, phosphatidylcholine, and phosphatidylethanolamine. Functions as a scramblase that flips lipids in both directions across the membrane. Phospholipid scrambling results in gammaretroviral surface exposure of phosphatidylserine and loss of membrane asymmetry, which leads to loss of infectivity. The chain is Serine incorporator 3 (SERINC3) from Bos taurus (Bovine).